The chain runs to 413 residues: Argininosuccinate synthase (413 aa).

Ala22–Ser30 is a binding site for ATP. Residues Tyr100 and Ser105 each contribute to the L-citrulline site. Gly130 lines the ATP pocket. Positions 132, 136, and 137 each coordinate L-aspartate. Asn136 lines the L-citrulline pocket. L-citrulline-binding residues include Arg140, Ser189, Ser198, Glu274, and Tyr286.

The protein belongs to the argininosuccinate synthase family. Type 1 subfamily. In terms of assembly, homotetramer.

The protein resides in the cytoplasm. The catalysed reaction is L-citrulline + L-aspartate + ATP = 2-(N(omega)-L-arginino)succinate + AMP + diphosphate + H(+). It participates in amino-acid biosynthesis; L-arginine biosynthesis; L-arginine from L-ornithine and carbamoyl phosphate: step 2/3. The protein is Argininosuccinate synthase of Endomicrobium trichonymphae.